A 254-amino-acid chain; its full sequence is Putative epimerase LsrE (254 aa).

A helical transmembrane segment spans residues 14-34; the sequence is VALLASYPLSVGILAGQWIAL. A divalent metal cation-binding residues include histidine 50, aspartate 52, and histidine 81. The active-site Proton acceptor is aspartate 52. Residues histidine 81, 166–169, 199–201, and 221–222 each bind substrate; these read GYGS, DGS, and GS. Residue aspartate 199 coordinates a divalent metal cation. Catalysis depends on aspartate 199, which acts as the Proton donor.

This sequence belongs to the ribulose-phosphate 3-epimerase family. A divalent metal cation is required as a cofactor.

The protein resides in the cell membrane. This Salmonella typhi protein is Putative epimerase LsrE (lsrE).